Reading from the N-terminus, the 345-residue chain is UDP-N-acetylenolpyruvoylglucosamine reductase (345 aa).

Residues 16 to 186 enclose the FAD-binding PCMH-type domain; that stretch reads LPAYASNVIS…VSVGIKLMKS (171 aa). Arg-162 is an active-site residue. Ser-232 acts as the Proton donor in catalysis. Glu-328 is a catalytic residue.

Belongs to the MurB family. It depends on FAD as a cofactor.

The protein localises to the cytoplasm. It catalyses the reaction UDP-N-acetyl-alpha-D-muramate + NADP(+) = UDP-N-acetyl-3-O-(1-carboxyvinyl)-alpha-D-glucosamine + NADPH + H(+). Its pathway is cell wall biogenesis; peptidoglycan biosynthesis. Its function is as follows. Cell wall formation. This chain is UDP-N-acetylenolpyruvoylglucosamine reductase, found in Yersinia pestis.